Reading from the N-terminus, the 1021-residue chain is Phytosulfokine receptor 1 (1021 aa).

The N-terminal stretch at 1 to 24 is a signal peptide; that stretch reads MGVLRVYVILILVGFCVQIVVVNS. An LRR 1 repeat occupies 21–43; the sequence is VVNSQNLTCNSNDLKALEGFMRG. N-linked (GlcNAc...) asparagine glycosylation is found at Asn-26, Asn-54, and Asn-83. 16 LRR repeats span residues 85 to 109, 110 to 133, 135 to 156, 158 to 180, 181 to 205, 206 to 229, 231 to 252, 253 to 277, 301 to 325, 326 to 349, 351 to 372, 373 to 397, 402 to 426, 428 to 448, 449 to 474, and 476 to 496; these read SGRVVELELGRRKLSGKLSESVAKL, DQLKVLNLTHNSLSGSIAASLLNL, NLEVLDLSSNDFSGLFPSLINL, SLRVLNVYENSFHGLIPASLCNN, LPRIREIDLAMNYFDGSIPVGIGNC, SSVEYLGLASNNLSGSIPQELFQL, NLSVLALQNNRLSGALSSKLGK, LSNLGRLDISSNKFSGKIPDVFLEL, SRSISLLSLRNNTLSGQIYLNCSAM, TNLTSLDLASNSFSGSIPSNLPNC, RLKTINFAKIKFIAQIPESFKN, FQSLTSLSFSNSSIQNISSALEILQ, LKTLVLTLNFQKEELPSVPSLQFKN, KVLIIASCQLRGTVPQWLSNS, PSLQLLDLSWNQLSGTIPPWLGSLNS, and FYLDLSNNTFIGEIPHSLTSL. N-linked (GlcNAc...) asparagine glycans are attached at residues Asn-116 and Asn-132. N-linked (GlcNAc...) asparagine glycans are attached at residues Asn-204, Asn-217, and Asn-231. Asn-311, Asn-321, and Asn-327 each carry an N-linked (GlcNAc...) asparagine glycan. N-linked (GlcNAc...) asparagine glycans are attached at residues Asn-383 and Asn-388. Asn-482, Asn-546, Asn-568, Asn-576, and Asn-592 each carry an N-linked (GlcNAc...) asparagine glycan. Residues 498-555 form an LRR 18; atypical repeat; the sequence is SLVSKENAVEEPSPDFPFFKKKNTNAGGLQYNQPSSFPPMIDLSYNSLNGSIWPEFGD. 3 LRR repeats span residues 556 to 580, 581 to 604, and 606 to 629; these read LRQLHVLNLKNNNLSGNIPANLSGM, TSLEVLDLSHNNLSGNIPPSLVKL, and FLSTFSVAYNKLSGPIPTGVQFQT. The N-linked (GlcNAc...) asparagine glycan is linked to Asn-632. The chain crosses the membrane as a helical span at residues 673-693; that stretch reads VAVGTGLGTVFLLTVTLLIIL. A Protein kinase domain is found at 743-1014; it reads FNQANIIGCG…PTTQQLVSWL (272 aa). ATP contacts are provided by residues 749–757 and Lys-771; that span reads IGCGGFGLV. Asp-869 functions as the Proton acceptor in the catalytic mechanism.

It belongs to the protein kinase superfamily. Ser/Thr protein kinase family. In terms of processing, N-glycosylated. In terms of tissue distribution, expressed ubiquitously in leaf, apical meristem, hypocotyl and root.

It is found in the cell membrane. It catalyses the reaction L-seryl-[protein] + ATP = O-phospho-L-seryl-[protein] + ADP + H(+). The catalysed reaction is L-threonyl-[protein] + ATP = O-phospho-L-threonyl-[protein] + ADP + H(+). Functionally, phytosulfokine receptor with a serine/threonine-protein kinase activity. Regulates, in response to phytosulfokine binding, a signaling cascade involved in plant cell differentiation, organogenesis and somatic embryogenesis. The protein is Phytosulfokine receptor 1 (PSKR) of Daucus carota (Wild carrot).